A 175-amino-acid chain; its full sequence is Transcription factor E (175 aa).

One can recognise an HTH TFE/IIEalpha-type domain in the interval 3 to 88; it reads DNPLIQQVLF…TWKPSLEKLP (86 aa).

It belongs to the TFE family. Monomer. Interaction with RNA polymerase subunits RpoF and RpoE is necessary for Tfe stimulatory transcription activity. Able to interact with Tbp and RNA polymerase in the absence of DNA promoter. Interacts both with the preinitiation and elongation complexes.

Functionally, transcription factor that plays a role in the activation of archaeal genes transcribed by RNA polymerase. Facilitates transcription initiation by enhancing TATA-box recognition by TATA-box-binding protein (Tbp), and transcription factor B (Tfb) and RNA polymerase recruitment. Not absolutely required for transcription in vitro, but particularly important in cases where Tbp or Tfb function is not optimal. It dynamically alters the nucleic acid-binding properties of RNA polymerases by stabilizing the initiation complex and destabilizing elongation complexes. Seems to translocate with the RNA polymerase following initiation and acts by binding to the non template strand of the transcription bubble in elongation complexes. This Methanococcus vannielii (strain ATCC 35089 / DSM 1224 / JCM 13029 / OCM 148 / SB) protein is Transcription factor E.